The primary structure comprises 1155 residues: MARYTQRPENALKRANEFIEVGKPLRALDTLQEVFRNKRWNYAYSETVIEPLMFKYLYLCVELKKSHIAKEGLFQYRNMFQLVNVNSLENVIRGYLKMAEEHTEAAQAQSSAAVAVLELDDLDNIATPESILMSAVCGEDAQDRSDRTILLPWVKFLWESYCQCLELLRVNTHCEALYHDIARMAFQFCLKYNRKSEFRRLCDKLRKHLEDICKSSNQTTGVSINKVETQQLCLDTRLYLLDSAIQMELWQEAYKAIEDIHGLMALSKKTPVPKTMANYYQKLAMVFSKAGNQLFHAAALLKLFQLTRELKKNLTKDDLQRMAAHVLLATLSIPLPSAHPEFDRFIEADKSPLEKAQKLAVLLGLPQPPTRVSLIREVVRLNVPQLVSEDFRNLYNWLEVDFNPLNLCKRIQSIVDIIETGPTETNLLSPYIQSLKDVTIMRLIRQISQVYESIEFKRLLELATFCNIFELEKLLVESVRHNDMQIRIDHQKNSIYFGTDLTESQREYRPDGPALQSMPSEQIRSQLVNMSTVLTRAVSIVYPNRERDQRAKLRTQMVHHYHEIKDREHQRILQRQKIIEDRKEYIEKQNNAREEEEARRQEEESRKAKLAEQKRLELEQEERERKRHQNEIQAIKEKSLKEKVQQISQTAHGKKMLSKLDEEGIKKLDAEQIAKRESEELQREAKELQSKLKSQEKKIDYYERAKRLEEIPLFEKYLAEKQVKDKEFWEATEKTRIENAIAERKDAVSQQERLKRMYPDRDEFLEALKKERASLYVEKLKKFEIALEAERKKRLADRVIRRREERRQAFLREKEEERLRKEEEIRLAQAAEERAAAEARRLEREAEDEKRRAQYEKQRAKEEEAERKIKEDRDRLAREVAVERERSDKERDTWRPRGGDRPSAASAGGGGGAGEWRRAAAPIGDRNERAGDRIERGGERMERGGDRMERGGDRMERGGERTEHRDRERRDNEGADSSWRVRREPDSQRGAGVKDASGSAAPPSRDDKWRRGGDRDRDRDRDFRNDGPRRDRDDRDDRDRGGFRRNDGPRRNDDAAPRETGGNWRDAPRQSDRDNRRPAGDRRDREVRGGDLRGPESRAPKEGGPSGGTGTAASGGGNWRTAPGPRDEPAPKRDQPQDKENKAVDDGEWTSVKRR.

Residues 319-502 (LQRMAAHVLL…NSIYFGTDLT (184 aa)) form the PCI domain. Disordered stretches follow at residues 589–613 (QNNA…LAEQ) and 836–1155 (AAEA…VKRR). Basic and acidic residues-rich tracts occupy residues 836–900 (AAEA…RGGD), 925–987 (DRNE…EPDS), 1004–1057 (SRDD…DAAP), and 1066–1101 (DAPR…RAPK). Residues 1104 to 1118 (GPSGGTGTAASGGGN) are compositionally biased toward gly residues. The segment covering 1125 to 1145 (PRDEPAPKRDQPQDKENKAVD) has biased composition (basic and acidic residues).

It belongs to the eIF-3 subunit A family. In terms of assembly, component of the eukaryotic translation initiation factor 3 (eIF-3) complex. The eIF-3 complex interacts with pix.

The protein localises to the cytoplasm. In terms of biological role, RNA-binding component of the eukaryotic translation initiation factor 3 (eIF-3) complex, which is involved in protein synthesis of a specialized repertoire of mRNAs and, together with other initiation factors, stimulates binding of mRNA and methionyl-tRNAi to the 40S ribosome. The eIF-3 complex specifically targets and initiates translation of a subset of mRNAs involved in cell proliferation. The protein is Eukaryotic translation initiation factor 3 subunit A of Drosophila pseudoobscura pseudoobscura (Fruit fly).